We begin with the raw amino-acid sequence, 241 residues long: MGFLPFVFPFAELEVGQQLYWQIGNFRIHGQVFMTSWLLIGALLALVVIGTKKMERDPRGVQNLLEFLWDYIRDLARTQIGEKVYRDWMPFIGTLFLFIFVSNWGGALVPWKLIKLPSGELGAPTADINTTVALALLVSLSYFYAGLSNKGLRYFEYYVHPTPIMLPFKIVEDFTKPLSLSFRLFGNILADELVVAVLVFLVPLVLPVPVMFLGLFTSAIQALIFATLAAYYIGEAVEEHH.

5 helical membrane passes run 30–50, 91–111, 128–148, 193–213, and 214–234; these read GQVF…VVIG, FIGT…LVPW, INTT…AGLS, LVVA…VMFL, and GLFT…YYIG.

This sequence belongs to the ATPase A chain family. As to quaternary structure, F-type ATPases have 2 components, CF(1) - the catalytic core - and CF(0) - the membrane proton channel. CF(1) has five subunits: alpha(3), beta(3), gamma(1), delta(1), epsilon(1). CF(0) has four main subunits: a, b, b' and c.

It is found in the cellular thylakoid membrane. Functionally, key component of the proton channel; it plays a direct role in the translocation of protons across the membrane. This is ATP synthase subunit a from Prochlorococcus marinus (strain NATL1A).